A 390-amino-acid chain; its full sequence is Homoserine O-succinyltransferase (390 aa).

In terms of domain architecture, AB hydrolase-1 spans 56-365 (NAVLICHALS…SPHGHDAFLL (310 aa)). The active-site Nucleophile is the Ser-162. Residue Arg-232 coordinates substrate. Active-site residues include Asp-327 and His-360. Asp-361 contributes to the substrate binding site.

Belongs to the AB hydrolase superfamily. MetX family. In terms of assembly, homodimer.

The protein localises to the cytoplasm. The catalysed reaction is L-homoserine + succinyl-CoA = O-succinyl-L-homoserine + CoA. It functions in the pathway amino-acid biosynthesis; L-methionine biosynthesis via de novo pathway; O-succinyl-L-homoserine from L-homoserine: step 1/1. In terms of biological role, transfers a succinyl group from succinyl-CoA to L-homoserine, forming succinyl-L-homoserine. In vitro, also has serine succinyl transferase activity. The polypeptide is Homoserine O-succinyltransferase (Litchfieldella anticariensis (strain DSM 16096 / CECT 5854 / CIP 108499 / LMG 22089 / FP35) (Halomonas anticariensis)).